We begin with the raw amino-acid sequence, 331 residues long: 6-phosphogluconolactonase (331 aa).

The protein belongs to the cycloisomerase 2 family.

The enzyme catalyses 6-phospho-D-glucono-1,5-lactone + H2O = 6-phospho-D-gluconate + H(+). It functions in the pathway carbohydrate degradation; pentose phosphate pathway; D-ribulose 5-phosphate from D-glucose 6-phosphate (oxidative stage): step 2/3. Its function is as follows. Catalyzes the hydrolysis of 6-phosphogluconolactone to 6-phosphogluconate. This is 6-phosphogluconolactonase from Salmonella paratyphi B (strain ATCC BAA-1250 / SPB7).